The primary structure comprises 64 residues: Large ribosomal subunit protein bL33 (64 aa).

The protein belongs to the bacterial ribosomal protein bL33 family.

This chain is Large ribosomal subunit protein bL33, found in Synechococcus sp. (strain JA-3-3Ab) (Cyanobacteria bacterium Yellowstone A-Prime).